Reading from the N-terminus, the 55-residue chain is uncharacterized protein (55 aa).

This is an uncharacterized protein from Homo sapiens (Human).